A 95-amino-acid polypeptide reads, in one-letter code: Co-chaperonin GroES (95 aa).

Belongs to the GroES chaperonin family. Heptamer of 7 subunits arranged in a ring. Interacts with the chaperonin GroEL.

The protein resides in the cytoplasm. Together with the chaperonin GroEL, plays an essential role in assisting protein folding. The GroEL-GroES system forms a nano-cage that allows encapsulation of the non-native substrate proteins and provides a physical environment optimized to promote and accelerate protein folding. GroES binds to the apical surface of the GroEL ring, thereby capping the opening of the GroEL channel. The chain is Co-chaperonin GroES from Bordetella petrii (strain ATCC BAA-461 / DSM 12804 / CCUG 43448).